We begin with the raw amino-acid sequence, 141 residues long: Ribosomal RNA large subunit methyltransferase H (141 aa).

G88 provides a ligand contact to S-adenosyl-L-methionine.

This sequence belongs to the RNA methyltransferase RlmH family. In terms of assembly, homodimer.

The protein localises to the cytoplasm. The enzyme catalyses pseudouridine(1915) in 23S rRNA + S-adenosyl-L-methionine = N(3)-methylpseudouridine(1915) in 23S rRNA + S-adenosyl-L-homocysteine + H(+). Functionally, specifically methylates the pseudouridine at position 1915 (m3Psi1915) in 23S rRNA. In Novosphingobium aromaticivorans (strain ATCC 700278 / DSM 12444 / CCUG 56034 / CIP 105152 / NBRC 16084 / F199), this protein is Ribosomal RNA large subunit methyltransferase H.